The sequence spans 1859 residues: DNA-directed RNA polymerase subunit beta'' (1859 aa).

The Zn(2+) site is built by Cys-286, Cys-359, Cys-366, and Cys-369.

The protein belongs to the RNA polymerase beta' chain family. RpoC2 subfamily. In terms of assembly, in plastids the minimal PEP RNA polymerase catalytic core is composed of four subunits: alpha, beta, beta', and beta''. When a (nuclear-encoded) sigma factor is associated with the core the holoenzyme is formed, which can initiate transcription. Zn(2+) serves as cofactor.

It is found in the plastid. It localises to the chloroplast. It catalyses the reaction RNA(n) + a ribonucleoside 5'-triphosphate = RNA(n+1) + diphosphate. Functionally, DNA-dependent RNA polymerase catalyzes the transcription of DNA into RNA using the four ribonucleoside triphosphates as substrates. The protein is DNA-directed RNA polymerase subunit beta'' of Oltmannsiellopsis viridis (Marine flagellate).